The following is a 317-amino-acid chain: Beta-ketoacyl-[acyl-carrier-protein] synthase III (317 aa).

Residues Cys112 and His244 contribute to the active site. The interval 245 to 249 (QANLR) is ACP-binding. Asn274 is an active-site residue.

Belongs to the thiolase-like superfamily. FabH family. In terms of assembly, homodimer.

It localises to the cytoplasm. It catalyses the reaction malonyl-[ACP] + acetyl-CoA + H(+) = 3-oxobutanoyl-[ACP] + CO2 + CoA. It functions in the pathway lipid metabolism; fatty acid biosynthesis. Functionally, catalyzes the condensation reaction of fatty acid synthesis by the addition to an acyl acceptor of two carbons from malonyl-ACP. Catalyzes the first condensation reaction which initiates fatty acid synthesis and may therefore play a role in governing the total rate of fatty acid production. Possesses both acetoacetyl-ACP synthase and acetyl transacylase activities. Its substrate specificity determines the biosynthesis of branched-chain and/or straight-chain of fatty acids. In Escherichia coli O9:H4 (strain HS), this protein is Beta-ketoacyl-[acyl-carrier-protein] synthase III.